A 128-amino-acid polypeptide reads, in one-letter code: Protein ripply2 (128 aa).

The tract at residues 1–64 (MDTTESAESA…ALPSGPGMAE (64 aa)) is disordered. Positions 17–28 (PSRSRCPPSAQP) are enriched in low complexity. The WRPW motif signature appears at 34 to 37 (WRPW). The tract at residues 74–109 (HPVRLFWPKSKCYDYLYQEAETLLKNFPIQATISFY) is ripply homology domain.

The protein belongs to the ripply family. In terms of tissue distribution, expressed in the embryonic anterior presomitic mesoderm. First expressed in S-I at 8.5 dpc, where expression is maintained until 13.5 dpc, with an additional stripe of expression sometimes seen in the rostral part of S0 and S-I.

It is found in the nucleus. Plays a role in somitogenesis. Required for somite segregation and establishment of rostrocaudal polarity in somites. This Mus musculus (Mouse) protein is Protein ripply2.